The chain runs to 275 residues: Monooxygenase af470 (275 aa).

It carries out the reaction prefumagillin + NADPH + 2 O2 = fumagillin + acetaldehyde + NADP(+) + H2O. It functions in the pathway secondary metabolite biosynthesis; terpenoid biosynthesis. Monooxygenase; part of the gene cluster that mediates the biosynthesis of fumagillin, a meroterpenoid that has numerous biological activities including irreversible inhibition of human type 2 methionine aminopeptidase (METAP2). Within the pathway, the monooxygenase af470 catalyzes the oxidative cleavage of prefumagillin to yield the final compound of the pathway, fumagillin. The pathway begins with the conversion of farnesyl pyrophosphate (FPP) to beta-trans-bergamotene by the membrane-bound beta-trans-bergamotene synthase af520. The multifunctional cytochrome P450 monooxygenase af510 then converts beta-trans-bergamotene into 5-keto-demethoxyfumagillol via several oxydation steps. 5-keto-demethoxyfumagillol is then subjected to successive C-6 hydroxylation and O-methylation by the dioxygenase af480 and O-methyltransferase af390-400, respectively, to yield 5-keto-fumagillol, which is then stereoselectively reduced by the keto-reductase af490 to 5R-hydroxy-seco-sesquiterpene. The next step is the polyketide transferase af380-catalyzed transfer of a dodecapentaenoyl group synthesized by the polyketide synthase af370 onto 5R-hydroxy-seco-sesquiterpene which leads to the production of prefumagillin. Finally, oxidative cleavage by the monooxygenase af470 converts prefumagillin to fumagillin. The chain is Monooxygenase af470 from Aspergillus fumigatus (strain ATCC MYA-4609 / CBS 101355 / FGSC A1100 / Af293) (Neosartorya fumigata).